A 730-amino-acid polypeptide reads, in one-letter code: Phosphoribosylformylglycinamidine synthase subunit PurL (730 aa).

Residue histidine 44 is part of the active site. Tyrosine 47 and lysine 86 together coordinate ATP. Glutamate 88 lines the Mg(2+) pocket. Residues 89-92 (SHNH) and arginine 111 each bind substrate. Histidine 90 acts as the Proton acceptor in catalysis. Mg(2+) is bound at residue aspartate 112. Position 235 (glutamine 235) interacts with substrate. A Mg(2+)-binding site is contributed by aspartate 263. 307–309 (ESQ) serves as a coordination point for substrate. Residues asparagine 489 and glycine 526 each contribute to the ATP site. Asparagine 527 is a binding site for Mg(2+). Position 529 (serine 529) interacts with substrate.

The protein belongs to the FGAMS family. Monomer. Part of the FGAM synthase complex composed of 1 PurL, 1 PurQ and 2 PurS subunits.

It is found in the cytoplasm. It catalyses the reaction N(2)-formyl-N(1)-(5-phospho-beta-D-ribosyl)glycinamide + L-glutamine + ATP + H2O = 2-formamido-N(1)-(5-O-phospho-beta-D-ribosyl)acetamidine + L-glutamate + ADP + phosphate + H(+). It functions in the pathway purine metabolism; IMP biosynthesis via de novo pathway; 5-amino-1-(5-phospho-D-ribosyl)imidazole from N(2)-formyl-N(1)-(5-phospho-D-ribosyl)glycinamide: step 1/2. Functionally, part of the phosphoribosylformylglycinamidine synthase complex involved in the purines biosynthetic pathway. Catalyzes the ATP-dependent conversion of formylglycinamide ribonucleotide (FGAR) and glutamine to yield formylglycinamidine ribonucleotide (FGAM) and glutamate. The FGAM synthase complex is composed of three subunits. PurQ produces an ammonia molecule by converting glutamine to glutamate. PurL transfers the ammonia molecule to FGAR to form FGAM in an ATP-dependent manner. PurS interacts with PurQ and PurL and is thought to assist in the transfer of the ammonia molecule from PurQ to PurL. In Pelagibacter ubique (strain HTCC1062), this protein is Phosphoribosylformylglycinamidine synthase subunit PurL.